The primary structure comprises 361 residues: Chorismate synthase (361 aa).

Residues 40-49 (DLQHDLDRRR) show a composition bias toward basic and acidic residues. The segment at 40 to 60 (DLQHDLDRRRPGTSRHTTQRR) is disordered. NADP(+) contacts are provided by R48 and R54. Residues 125 to 127 (RSS), 237 to 238 (NA), G277, 292 to 296 (KPTSS), and R318 each bind FMN.

It belongs to the chorismate synthase family. As to quaternary structure, homotetramer. FMNH2 serves as cofactor.

It catalyses the reaction 5-O-(1-carboxyvinyl)-3-phosphoshikimate = chorismate + phosphate. The protein operates within metabolic intermediate biosynthesis; chorismate biosynthesis; chorismate from D-erythrose 4-phosphate and phosphoenolpyruvate: step 7/7. In terms of biological role, catalyzes the anti-1,4-elimination of the C-3 phosphate and the C-6 proR hydrogen from 5-enolpyruvylshikimate-3-phosphate (EPSP) to yield chorismate, which is the branch point compound that serves as the starting substrate for the three terminal pathways of aromatic amino acid biosynthesis. This reaction introduces a second double bond into the aromatic ring system. This is Chorismate synthase from Chromohalobacter salexigens (strain ATCC BAA-138 / DSM 3043 / CIP 106854 / NCIMB 13768 / 1H11).